The chain runs to 156 residues: Inorganic triphosphatase (156 aa).

Positions 2 to 148 (GKEIEKKFIV…PRYLNSNLVK (147 aa)) constitute a CYTH domain. Tyr29 serves as the catalytic Proton acceptor.

In terms of assembly, homodimer.

It carries out the reaction triphosphate + H2O = phosphate + diphosphate. The catalysed reaction is ATP + H2O = ADP + phosphate + H(+). Functionally, involved in the hydrolysis of the beta-gamma-phosphoanhydride linkage of triphosphate-containing substrates (inorganic or nucleoside-linked). Catalyzes vigorously the hydrolysis of inorganic triphosphate (PPPi), however it can also catalyze the hydrolysis of ATP to ADP and phosphate. It can use ribonucleotides such as GTP, CTP, or UTP and deoxynucleotides such as dATP, dGTP, dCTP, and dTTP. The polypeptide is Inorganic triphosphatase (Acetivibrio thermocellus (strain ATCC 27405 / DSM 1237 / JCM 9322 / NBRC 103400 / NCIMB 10682 / NRRL B-4536 / VPI 7372) (Clostridium thermocellum)).